The sequence spans 426 residues: Ankyrin repeat-containing protein BDA1 (426 aa).

6 ANK repeats span residues 1–29, 36–65, 70–99, 104–134, 138–167, and 182–212; these read MDSK…DILQ, IIHT…SFAK, YGLS…SLVR, GGMT…SIKD, NGET…KMRD, and GGNT…DRNI. The next 4 membrane-spanning stretches (helical) occupy residues 288-308, 329-349, 355-375, and 380-400; these read ALLV…AQLL, WGCN…LLPV, WWYF…MYMM, and FFFL…VLYV.

Its subcellular location is the cell membrane. In terms of biological role, involved in plant defense. Required for basal resistance against Pseudomonas syringae pv. tomato DC3000. Required for resistance against nonpathogenic bacteria. May be involved in signaling components that function downstream of SNC2 and upstream of NPR1 and WRKY70 to regulate defense responses. This is Ankyrin repeat-containing protein BDA1 from Arabidopsis thaliana (Mouse-ear cress).